Reading from the N-terminus, the 231-residue chain is Peroxisomal membrane protein 11E (231 aa).

Over 1 to 91 the chain is Cytoplasmic; that stretch reads MTTLDLTRAE…LPLVLLGKSK (91 aa). A helical membrane pass occupies residues 92–108; the sequence is NALLSTFLFLDQIVWLG. Residues 109–202 are Lumenal-facing; that stretch reads RSGIYKNKER…LLQLAPKTIS (94 aa). Residues 203 to 222 form a helical membrane-spanning segment; the sequence is PRVTGAFGFTTSLISCYQLL. Residues 223–231 are Cytoplasmic-facing; the sequence is PSRPKLKTP.

The protein belongs to the peroxin-11 family. As to quaternary structure, homooligomer. Interacts with ARC5 and FIS1B on peroxisomes. In terms of tissue distribution, expressed in leaves and developing siliques.

It localises to the peroxisome membrane. Its function is as follows. Involved in peroxisomal proliferation. Promotes peroxisomal duplication, aggregation or elongation without fission. The sequence is that of Peroxisomal membrane protein 11E (PEX11E) from Arabidopsis thaliana (Mouse-ear cress).